We begin with the raw amino-acid sequence, 236 residues long: MAEAEESPGDPGTASPRPLFAGLSDISISQDIPVEGEITIPMRSRIREFDSSTLNESVRNTIMRDLKAVGKKFMHVLYPRKSNTLLRDWDLWGPLILCVTLALMLQRDSADSEKDGGPQFAEVFVIVWFGAVTITLNSKLLGGNISFFQSLCVLGYCILPLTVAMLICRLVLLADPGPVNFMVRLFVVIVMFAWSIVASTAFLADSQPPNRRALAVYPVFLFYFVISWMILTFTPQ.

N-acetylalanine is present on alanine 2. Residues 2-84 (AEAEESPGDP…HVLYPRKSNT (83 aa)) are Cytoplasmic-facing. Serine 7 is subject to Phosphoserine. A helical membrane pass occupies residues 85-105 (LLRDWDLWGPLILCVTLALML). The Lumenal portion of the chain corresponds to 106–115 (QRDSADSEKD). A helical membrane pass occupies residues 116–136 (GGPQFAEVFVIVWFGAVTITL). Over 137-146 (NSKLLGGNIS) the chain is Cytoplasmic. Residues 147 to 167 (FFQSLCVLGYCILPLTVAMLI) traverse the membrane as a helical segment. The Lumenal segment spans residues 168-184 (CRLVLLADPGPVNFMVR). Residues 185–205 (LFVVIVMFAWSIVASTAFLAD) traverse the membrane as a helical segment. The Cytoplasmic segment spans residues 206–212 (SQPPNRR). A helical transmembrane segment spans residues 213–233 (ALAVYPVFLFYFVISWMILTF). The Lumenal segment spans residues 234–236 (TPQ).

Belongs to the YIP1 family. As to quaternary structure, predominantly interacts with YIPF1 or YIPF2, but may also form a ternary complex with YIPF1 and YIPF2. This interaction may stabilize YIPF1 and YIPF2.

It localises to the golgi apparatus membrane. Functionally, may be required for stable YIPF1 and YIPF2 protein expression. The protein is Protein YIPF6 (YIPF6) of Homo sapiens (Human).